Here is a 491-residue protein sequence, read N- to C-terminus: Glucose-6-phosphate exchanger SLC37A2 (491 aa).

A helical transmembrane segment spans residues leucine 5–cysteine 25. N-linked (GlcNAc...) asparagine glycans are attached at residues asparagine 43, asparagine 52, and asparagine 58. 5 helical membrane-spanning segments follow: residues glycine 78–phenylalanine 98, leucine 108–isoleucine 130, valine 132–valine 154, leucine 169–alanine 189, and serine 200–isoleucine 220. The interval serine 229–serine 257 is disordered. 6 helical membrane-spanning segments follow: residues leucine 292–isoleucine 312, threonine 328–isoleucine 348, alanine 352–valine 372, isoleucine 377–leucine 397, alanine 424–isoleucine 444, and valine 452–tyrosine 472.

This sequence belongs to the major facilitator superfamily. Organophosphate:Pi antiporter (OPA) (TC 2.A.1.4) family.

It localises to the endoplasmic reticulum membrane. It carries out the reaction D-glucose 6-phosphate(in) + phosphate(out) = D-glucose 6-phosphate(out) + phosphate(in). Inhibited by vanadate but not by chlorogenic acid. Functionally, inorganic phosphate and glucose-6-phosphate antiporter. May transport cytoplasmic glucose-6-phosphate into the lumen of the endoplasmic reticulum and translocate inorganic phosphate into the opposite direction. Independent of a lumenal glucose-6-phosphatase. May not play a role in homeostatic regulation of blood glucose levels. The chain is Glucose-6-phosphate exchanger SLC37A2 from Bos taurus (Bovine).